A 432-amino-acid chain; its full sequence is Pachytene checkpoint protein 2 homolog (432 aa).

Residue 179-186 (GPPGTGKT) participates in ATP binding.

Belongs to the AAA ATPase family. PCH2 subfamily.

Its function is as follows. Plays a key role in chromosome recombination and chromosome structure development during meiosis. Required at early steps in meiotic recombination that leads to non-crossovers pathways. Also needed for efficient completion of homologous synapsis by influencing crossover distribution along the chromosomes affecting both crossovers and non-crossovers pathways. The protein is Pachytene checkpoint protein 2 homolog (trip13) of Xenopus tropicalis (Western clawed frog).